The primary structure comprises 522 residues: Gypsy retrotransposon integrase-like protein 1 (522 aa).

In terms of domain architecture, Integrase catalytic spans 135–292 (KVENPWSLVT…TPYFQMFSRN (158 aa)). S502 bears the Phosphoserine mark.

In terms of tissue distribution, widely expressed. Also found in tumors originating from parathyroid gland, colon, stomach, bladder, uterus and prostate.

This chain is Gypsy retrotransposon integrase-like protein 1 (GIN1), found in Homo sapiens (Human).